Here is a 232-residue protein sequence, read N- to C-terminus: Large ribosomal subunit protein uL1 (232 aa).

Belongs to the universal ribosomal protein uL1 family. In terms of assembly, part of the 50S ribosomal subunit.

Its function is as follows. Binds directly to 23S rRNA. The L1 stalk is quite mobile in the ribosome, and is involved in E site tRNA release. Protein L1 is also a translational repressor protein, it controls the translation of the L11 operon by binding to its mRNA. The sequence is that of Large ribosomal subunit protein uL1 from Burkholderia multivorans (strain ATCC 17616 / 249).